A 522-amino-acid polypeptide reads, in one-letter code: Nif-specific regulatory protein (522 aa).

Residues Met-1 to Ile-184 form an a domain region. The 142-residue stretch at Gln-37 to Val-178 folds into the GAF domain. The region spanning Val-211–Ile-439 is the Sigma-54 factor interaction domain. ATP is bound by residues Gly-239 to Glu-246 and Ala-302 to Glu-311. Residues Met-440–Asp-479 form an inter-domain linker region. Residues Arg-480 to Ile-522 are C-terminal DNA-binding domain. Residues Gln-494 to Gln-513 constitute a DNA-binding region (H-T-H motif).

Interacts with sigma-54.

Functionally, required for activation of most nif operons, which are directly involved in nitrogen fixation. The polypeptide is Nif-specific regulatory protein (nifA) (Azotobacter vinelandii).